Reading from the N-terminus, the 118-residue chain is Large ribosomal subunit protein bL17 (118 aa).

Belongs to the bacterial ribosomal protein bL17 family. In terms of assembly, part of the 50S ribosomal subunit. Contacts protein L32.

This Campylobacter concisus (strain 13826) protein is Large ribosomal subunit protein bL17.